Here is a 459-residue protein sequence, read N- to C-terminus: Cysteine--tRNA ligase (459 aa).

Residue C28 coordinates Zn(2+). The short motif at 30–40 (ITIYDLCHIGH) is the 'HIGH' region element. Zn(2+) contacts are provided by C209, H234, and E238. The short motif at 266–270 (KMSKS) is the 'KMSKS' region element. Position 269 (K269) interacts with ATP.

Belongs to the class-I aminoacyl-tRNA synthetase family. As to quaternary structure, monomer. Requires Zn(2+) as cofactor.

The protein resides in the cytoplasm. It carries out the reaction tRNA(Cys) + L-cysteine + ATP = L-cysteinyl-tRNA(Cys) + AMP + diphosphate. The sequence is that of Cysteine--tRNA ligase from Shewanella denitrificans (strain OS217 / ATCC BAA-1090 / DSM 15013).